The sequence spans 228 residues: Urease accessory protein UreF (228 aa).

The protein belongs to the UreF family. In terms of assembly, ureD, UreF and UreG form a complex that acts as a GTP-hydrolysis-dependent molecular chaperone, activating the urease apoprotein by helping to assemble the nickel containing metallocenter of UreC. The UreE protein probably delivers the nickel.

The protein localises to the cytoplasm. Its function is as follows. Required for maturation of urease via the functional incorporation of the urease nickel metallocenter. This is Urease accessory protein UreF from Lachnoclostridium phytofermentans (strain ATCC 700394 / DSM 18823 / ISDg) (Clostridium phytofermentans).